A 694-amino-acid polypeptide reads, in one-letter code: Ferric reductase transmembrane component 5 (694 aa).

The first 19 residues, 1-19, serve as a signal peptide directing secretion; it reads MLFARLVLLLVYLAPGSLA. Residues 20–163 lie on the Extracellular side of the membrane; that stretch reads KPASTKKRTQ…LDNIDKGNVY (144 aa). The N-linked (GlcNAc...) asparagine glycan is linked to N117. The chain crosses the membrane as a helical span at residues 164–184; sequence GVTICLYWIGVLFIAAVYHFL. Topologically, residues 185-222 are cytoplasmic; the sequence is NFSRLKQTVFKNKVSAFLRGHYVLPALVHNHAMSVGRW. The chain crosses the membrane as a helical span at residues 223-243; that stretch reads FFIGLVPTRLETLVLFGYVLL. Topologically, residues 244 to 267 are extracellular; sequence HGFLLSSYNFDHNELLSDRRSQVL. Residues 268 to 288 form a helical membrane-spanning segment; that stretch reads IFLSDRAGILAFAHFPLIVLF. Residues 274–408 form the Ferric oxidoreductase domain; that stretch reads AGILAFAHFP…GWGEWIMACA (135 aa). Residues 289 to 311 are Cytoplasmic-facing; the sequence is GGKNSTMTWLTGIRYTAFITYHK. Residues H310 and H324 each contribute to the heme site. Residues 312 to 334 traverse the membrane as a helical segment; the sequence is WLGRFMLVDCTIHAIGYTYHAYI. Over 335-347 the chain is Extracellular; sequence ENYWKYVKYSDLW. The chain crosses the membrane as a helical span at residues 348–368; it reads TSGRHAMIIVGILVFFSFFFF. Topologically, residues 369–371 are cytoplasmic; that stretch reads RRH. Residues 372–392 form a helical membrane-spanning segment; it reads YYELFVITHIILAIGFFHACW. Heme contacts are provided by H380 and H394. Residues 393–403 lie on the Extracellular side of the membrane; sequence KHCYKLGWGEW. Residues 404–424 traverse the membrane as a helical segment; it reads IMACALFWIADRILRLIKIAI. An FAD-binding FR-type domain is found at 409–528; sequence LFWIADRILR…EGPYGQSTRT (120 aa). Over 425-694 the chain is Cytoplasmic; the sequence is FGMPWAKLKL…IEYVEEFQNW (270 aa). 473–479 contributes to the FAD binding site; sequence HPFTVMD. Residues 520-523 and 660-661 each bind NADP(+); these read GPYG and CG.

Belongs to the ferric reductase (FRE) family. It depends on FAD as a cofactor.

Its subcellular location is the cell membrane. It carries out the reaction 2 a Fe(II)-siderophore + NADP(+) + H(+) = 2 a Fe(III)-siderophore + NADPH. Metalloreductase responsible for reducing extracellular iron and copper prior to import. Catalyzes the reductive uptake of Fe(3+)-salts and Fe(3+) bound to catecholate or hydroxamate siderophores. Fe(3+) is reduced to Fe(2+), which then dissociates from the siderophore and can be imported by the high-affinity Fe(2+) transport complex in the plasma membrane. This chain is Ferric reductase transmembrane component 5 (FRE5), found in Saccharomyces cerevisiae (strain ATCC 204508 / S288c) (Baker's yeast).